We begin with the raw amino-acid sequence, 211 residues long: Imidazole glycerol phosphate synthase subunit HisH (211 aa).

A Glutamine amidotransferase type-1 domain is found at Val-3 to Ala-211. Cys-81 functions as the Nucleophile in the catalytic mechanism. Catalysis depends on residues His-186 and Glu-188.

Heterodimer of HisH and HisF.

The protein resides in the cytoplasm. It catalyses the reaction 5-[(5-phospho-1-deoxy-D-ribulos-1-ylimino)methylamino]-1-(5-phospho-beta-D-ribosyl)imidazole-4-carboxamide + L-glutamine = D-erythro-1-(imidazol-4-yl)glycerol 3-phosphate + 5-amino-1-(5-phospho-beta-D-ribosyl)imidazole-4-carboxamide + L-glutamate + H(+). The enzyme catalyses L-glutamine + H2O = L-glutamate + NH4(+). It participates in amino-acid biosynthesis; L-histidine biosynthesis; L-histidine from 5-phospho-alpha-D-ribose 1-diphosphate: step 5/9. In terms of biological role, IGPS catalyzes the conversion of PRFAR and glutamine to IGP, AICAR and glutamate. The HisH subunit catalyzes the hydrolysis of glutamine to glutamate and ammonia as part of the synthesis of IGP and AICAR. The resulting ammonia molecule is channeled to the active site of HisF. The protein is Imidazole glycerol phosphate synthase subunit HisH of Nostoc punctiforme (strain ATCC 29133 / PCC 73102).